Here is a 191-residue protein sequence, read N- to C-terminus: MSSLKAEFVVSSGKPDTFPSDRLPEIAFLGRSNVGKSSLINALTGHKKLAFTSNTPGRTQTINFYRVDEKFYLVDLPGYGYARVPAGFAEQWKVLIEHYLEFRETLKFSCLILDTRRGWMEKDLDLKRWLDHHGRPYLVVATKTDKLNQSEQERGLRAIRQEGVEPLPFSALSGRGVREIWQAITTTLQAR.

One can recognise an EngB-type G domain in the interval 22–190; it reads RLPEIAFLGR…WQAITTTLQA (169 aa). Residues 30 to 37, 57 to 61, 75 to 78, 142 to 145, and 169 to 171 each bind GTP; these read GRSNVGKS, GRTQT, DLPG, TKTD, and FSA. Mg(2+)-binding residues include S37 and T59.

It belongs to the TRAFAC class TrmE-Era-EngA-EngB-Septin-like GTPase superfamily. EngB GTPase family. Requires Mg(2+) as cofactor.

Its function is as follows. Necessary for normal cell division and for the maintenance of normal septation. In Solibacter usitatus (strain Ellin6076), this protein is Probable GTP-binding protein EngB.